Consider the following 205-residue polypeptide: Holliday junction branch migration complex subunit RuvA (205 aa).

A domain I region spans residues 1–64 (MIGRLKGILV…EDAQLLYGFI (64 aa)). Positions 65 to 143 (HKEERSLFRL…SLMEASMGAE (79 aa)) are domain II. A flexible linker region spans residues 144–156 (REFVLKSNFTPAP). Residues 157 to 205 (VAATVEEDAIAALLSLGYKPQQASKAVSSAFQEGMDPEQLIKAALKSML) form a domain III region.

This sequence belongs to the RuvA family. Homotetramer. Forms an RuvA(8)-RuvB(12)-Holliday junction (HJ) complex. HJ DNA is sandwiched between 2 RuvA tetramers; dsDNA enters through RuvA and exits via RuvB. An RuvB hexamer assembles on each DNA strand where it exits the tetramer. Each RuvB hexamer is contacted by two RuvA subunits (via domain III) on 2 adjacent RuvB subunits; this complex drives branch migration. In the full resolvosome a probable DNA-RuvA(4)-RuvB(12)-RuvC(2) complex forms which resolves the HJ.

The protein localises to the cytoplasm. Its function is as follows. The RuvA-RuvB-RuvC complex processes Holliday junction (HJ) DNA during genetic recombination and DNA repair, while the RuvA-RuvB complex plays an important role in the rescue of blocked DNA replication forks via replication fork reversal (RFR). RuvA specifically binds to HJ cruciform DNA, conferring on it an open structure. The RuvB hexamer acts as an ATP-dependent pump, pulling dsDNA into and through the RuvAB complex. HJ branch migration allows RuvC to scan DNA until it finds its consensus sequence, where it cleaves and resolves the cruciform DNA. This chain is Holliday junction branch migration complex subunit RuvA, found in Shewanella amazonensis (strain ATCC BAA-1098 / SB2B).